Here is a 570-residue protein sequence, read N- to C-terminus: Sulfite reductase [NADPH] hemoprotein beta-component (570 aa).

4 residues coordinate [4Fe-4S] cluster: cysteine 434, cysteine 440, cysteine 479, and cysteine 483. Residue cysteine 483 coordinates siroheme.

It belongs to the nitrite and sulfite reductase 4Fe-4S domain family. In terms of assembly, alpha(8)-beta(8). The alpha component is a flavoprotein, the beta component is a hemoprotein. Siroheme serves as cofactor. Requires [4Fe-4S] cluster as cofactor.

The enzyme catalyses hydrogen sulfide + 3 NADP(+) + 3 H2O = sulfite + 3 NADPH + 4 H(+). It participates in sulfur metabolism; hydrogen sulfide biosynthesis; hydrogen sulfide from sulfite (NADPH route): step 1/1. Component of the sulfite reductase complex that catalyzes the 6-electron reduction of sulfite to sulfide. This is one of several activities required for the biosynthesis of L-cysteine from sulfate. The sequence is that of Sulfite reductase [NADPH] hemoprotein beta-component from Escherichia coli O7:K1 (strain IAI39 / ExPEC).